A 1222-amino-acid chain; its full sequence is ATP-dependent helicase/nuclease subunit A (1222 aa).

The UvrD-like helicase ATP-binding domain maps to 39 to 495; it reads QKRTAQQIEA…ILLKENFRSQ (457 aa). 60-67 is an ATP binding site; that stretch reads ASAGSGKT. Residues 524–810 enclose the UvrD-like helicase C-terminal domain; the sequence is QLIAGSHAQT…NLMTIHKSKG (287 aa).

Belongs to the helicase family. AddA subfamily. In terms of assembly, heterodimer of AddA and AddB/RexB. It depends on Mg(2+) as a cofactor.

The enzyme catalyses Couples ATP hydrolysis with the unwinding of duplex DNA by translocating in the 3'-5' direction.. It carries out the reaction ATP + H2O = ADP + phosphate + H(+). Its function is as follows. The heterodimer acts as both an ATP-dependent DNA helicase and an ATP-dependent, dual-direction single-stranded exonuclease. Recognizes the chi site generating a DNA molecule suitable for the initiation of homologous recombination. The AddA nuclease domain is required for chi fragment generation; this subunit has the helicase and 3' -&gt; 5' nuclease activities. The protein is ATP-dependent helicase/nuclease subunit A of Streptococcus pyogenes serotype M6 (strain ATCC BAA-946 / MGAS10394).